The chain runs to 389 residues: MKILWITSVYPSSMKPGEGVFHETQVQELQKLGLDITVICPRPFHSAPVRMLKKTYRKKDVRPEYEIRKGIPVYRPFYRAVPGQLKWAQPHRRIASAVLKTMKQRDLYPDLIHAHFAMPSGGAAAVVSESAQIPYVLTLHGSDVNVYPHYSKGAFKAFKRAVGSASVVLAVSHKLQEEAKKLSGFDSSVLPIGIQLSRFQGNEETKEEIRKRLGLPLDQRLAVYVGRLVREKGIFELSEAIESLQDSPKAVFVGDGPAKSTLTQKGHIVTGQVPNHQVRDYLLAADLFVLPSYSEGMPTVVIEALALRVPVICTDVGGVSSLFGKHQHLLIKPKSAQALAEAITRYEHEQIWKPEVADDLYETVQAQFDAGKNAKALHHQYQTVTKTSV.

This sequence belongs to the glycosyltransferase group 1 family. Glycosyltransferase 4 subfamily.

Its pathway is cell wall biogenesis; teichuronic acid biosynthesis. The sequence is that of Putative teichuronic acid biosynthesis glycosyltransferase TuaC (tuaC) from Bacillus subtilis (strain 168).